Reading from the N-terminus, the 344-residue chain is Ribosomal RNA large subunit methyltransferase Cfr (344 aa).

The active-site Proton acceptor is glutamate 90. Residues 97–330 (KQGWESFCIS…ATVRTQFGSE (234 aa)) enclose the Radical SAM core domain. Cysteine 104 and cysteine 335 are oxidised to a cystine. Residues cysteine 111, cysteine 115, and cysteine 118 each coordinate [4Fe-4S] cluster. S-adenosyl-L-methionine is bound by residues 157-158 (GE), serine 188, 211-213 (SLH), and asparagine 292. Residue cysteine 335 is the S-methylcysteine intermediate of the active site.

It belongs to the radical SAM superfamily. RlmN family. Cfr subfamily. [4Fe-4S] cluster is required as a cofactor.

Its subcellular location is the cytoplasm. The catalysed reaction is adenosine(2503) in 23S rRNA + 2 reduced [2Fe-2S]-[ferredoxin] + 2 S-adenosyl-L-methionine = 8-methyladenosine(2503) in 23S rRNA + 5'-deoxyadenosine + L-methionine + 2 oxidized [2Fe-2S]-[ferredoxin] + S-adenosyl-L-homocysteine. Its function is as follows. Specifically methylates position 8 of adenine 2503 in 23S rRNA. Confers resistance to some classes of antibiotics. The sequence is that of Ribosomal RNA large subunit methyltransferase Cfr from Clostridium botulinum (strain Hall / ATCC 3502 / NCTC 13319 / Type A).